A 339-amino-acid polypeptide reads, in one-letter code: DNA-directed RNA polymerase subunit alpha (339 aa).

Residues 1-234 (MIEKNWQELI…DQFQIFINFE (234 aa)) form an alpha N-terminal domain (alpha-NTD) region. Residues 251 to 339 (FNPALLRKVD…DLAKRFEDHV (89 aa)) form an alpha C-terminal domain (alpha-CTD) region.

Belongs to the RNA polymerase alpha chain family. As to quaternary structure, homodimer. The RNAP catalytic core consists of 2 alpha, 1 beta, 1 beta' and 1 omega subunit. When a sigma factor is associated with the core the holoenzyme is formed, which can initiate transcription.

It catalyses the reaction RNA(n) + a ribonucleoside 5'-triphosphate = RNA(n+1) + diphosphate. In terms of biological role, DNA-dependent RNA polymerase catalyzes the transcription of DNA into RNA using the four ribonucleoside triphosphates as substrates. The sequence is that of DNA-directed RNA polymerase subunit alpha from Maricaulis maris (strain MCS10) (Caulobacter maris).